The chain runs to 192 residues: Cytochrome b-245 light chain (192 aa).

The Cytoplasmic portion of the chain corresponds to 2 to 7 (GQIEWA). A helical transmembrane segment spans residues 8 to 30 (MWANEQALASGLILMTGGIVATA). Residues 31-35 (GQFTQ) lie on the Extracellular side of the membrane. A helical transmembrane segment spans residues 36 to 53 (WYLGTYSIAAGVLVCLLE). At 54 to 69 (YPRGRRTKGSTMERCE) the chain is on the cytoplasmic side. The stretch at 70–80 (QKYMTKVVKAF) is an intramembrane region. Residues 81-86 (GPLSRN) are Cytoplasmic-facing. A helical membrane pass occupies residues 87-104 (YYIRAFLHLGLSVPAGFL). Position 105 (L105) is a topological domain, extracellular. A helical transmembrane segment spans residues 106–126 (ATILGTACLAIASGIYLLAAI). Topologically, residues 127-192 (RGEQWTPIEP…TPCPVTDEVV (66 aa)) are cytoplasmic. The segment at 134–192 (IEPKPKERPQVGGTIKQPPSNPPPRPPPEARKKPGEEAVAGVPRGAPRKTPCPVTDEVV) is disordered. T147 bears the Phosphothreonine mark. K149 is covalently cross-linked (Glycyl lysine isopeptide (Lys-Gly) (interchain with G-Cter in ubiquitin)).

The protein belongs to the p22phox family. Component of the phagocyte NADPH oxidase core complex/cytochrome b558 complex, composed of CYBB (heavy chain (beta)) and CYBA (light chain (alpha)). Component of the phagocyte NADPH oxidase complex composed of an obligatory core heterodimer formed by the membrane proteins CYBA and CYBB and the cytosolic regulatory subunits NCF1/p47-phox, NCF2/p67-phox, NCF4/p40-phox and the small GTPase RAC1 or RAC2. Interacts with NCF1 (via SH3 domain). Interacts with SH3PXD2A. Interacts with DUOX1, DUOX2 and TPO. Interacts with NOX4; this interaction mediates superoxide generation. Interacts with calprotectin (S100A8/9). Interacts with GBP7. Interacts with NOXO1. Forms a heterodimer with NOX3 and is essential for activity and cell membrane localization of NOX3. Interacts with NOX1. In terms of processing, phosphorylation at Thr-147 enhances NADPH oxidase activity by promoting NCF1/p47-phox binding. Post-translationally, ubiquitinated at Lys-149 likely by RNF145.

The protein localises to the cell membrane. In terms of biological role, subunit of NADPH oxidase complexes that is required for the NADPH oxidase activity that generates, in various cell types, superoxide from molecular oxygen utilizing NADPH as an electron donor. Subunit of the phagocyte NADPH oxidase complex that mediates the transfer of electrons from cytosolic NADPH to O2 to produce the superoxide anion (O2(-)). In the activated complex, electrons are first transferred from NADPH to flavin adenine dinucleotide (FAD) and subsequently transferred via two heme molecules to molecular oxygen, producing superoxide through an outer-sphere reaction. Activation of the NADPH oxidase complex is initiated by the assembly of cytosolic subunits of the NADPH oxidase complex with the core NADPH oxidase complex to form a complex at the plasma membrane or phagosomal membrane. This activation process is initiated by phosphorylation dependent binding of the cytosolic NCF1/p47-phox subunit to the C-terminus of CYBA/p22-phox. Aassociates with NOX3 to form a functional NADPH oxidase constitutively generating superoxide. This is Cytochrome b-245 light chain from Sus scrofa (Pig).